The chain runs to 220 residues: Thiopurine S-methyltransferase (220 aa).

Positions 10, 45, 66, and 123 each coordinate S-adenosyl-L-methionine.

The protein belongs to the class I-like SAM-binding methyltransferase superfamily. TPMT family.

The protein localises to the cytoplasm. The catalysed reaction is S-adenosyl-L-methionine + a thiopurine = S-adenosyl-L-homocysteine + a thiopurine S-methylether.. This Pseudomonas syringae pv. tomato (strain ATCC BAA-871 / DC3000) protein is Thiopurine S-methyltransferase.